We begin with the raw amino-acid sequence, 388 residues long: uncharacterized protein (388 aa).

Transmembrane regions (helical) follow at residues A18–V38, L42–L62, A89–L111, V116–L136, V145–L165, A171–I191, T219–F239, G248–F268, T287–I307, A341–I361, and Q365–L385.

It belongs to the major facilitator superfamily. YfcJ family.

The protein localises to the cell inner membrane. This is an uncharacterized protein from Salmonella typhimurium (strain LT2 / SGSC1412 / ATCC 700720).